Here is a 485-residue protein sequence, read N- to C-terminus: NADH-quinone oxidoreductase subunit N (485 aa).

14 helical membrane passes run L8 to I28, F35 to V55, G71 to A91, F105 to L125, S127 to F147, Y159 to A179, L203 to F223, P235 to M255, V271 to Q291, L297 to Q317, V326 to L346, A373 to I393, W408 to V430, and I455 to I475.

The protein belongs to the complex I subunit 2 family. NDH-1 is composed of 13 different subunits. Subunits NuoA, H, J, K, L, M, N constitute the membrane sector of the complex.

The protein resides in the cell inner membrane. It catalyses the reaction a quinone + NADH + 5 H(+)(in) = a quinol + NAD(+) + 4 H(+)(out). In terms of biological role, NDH-1 shuttles electrons from NADH, via FMN and iron-sulfur (Fe-S) centers, to quinones in the respiratory chain. The immediate electron acceptor for the enzyme in this species is believed to be ubiquinone. Couples the redox reaction to proton translocation (for every two electrons transferred, four hydrogen ions are translocated across the cytoplasmic membrane), and thus conserves the redox energy in a proton gradient. This is NADH-quinone oxidoreductase subunit N from Shigella flexneri.